The chain runs to 702 residues: Polyribonucleotide nucleotidyltransferase (702 aa).

Mg(2+)-binding residues include aspartate 487 and aspartate 493. The 60-residue stretch at 554–613 (PRLLTIKIHPDKIREVIGKGGSTIQAITKETGTQIDIQDDGTIVIASVNAIAAQAAKARI) folds into the KH domain. An S1 motif domain is found at 623–691 (GRIYEGKVAK…KQGRIRLSMK (69 aa)).

The protein belongs to the polyribonucleotide nucleotidyltransferase family. Component of the RNA degradosome, which is a multiprotein complex involved in RNA processing and mRNA degradation. Mg(2+) serves as cofactor.

Its subcellular location is the cytoplasm. It catalyses the reaction RNA(n+1) + phosphate = RNA(n) + a ribonucleoside 5'-diphosphate. Functionally, involved in mRNA degradation. Catalyzes the phosphorolysis of single-stranded polyribonucleotides processively in the 3'- to 5'-direction. The polypeptide is Polyribonucleotide nucleotidyltransferase (Stenotrophomonas maltophilia (strain R551-3)).